An 837-amino-acid chain; its full sequence is Anaphase-promoting complex subunit 2 (837 aa).

A phosphoserine mark is found at Ser-233, Ser-329, Ser-485, Ser-549, and Ser-712. The disordered stretch occupies residues 478–508 (CLETGQDSEDDSGEPEDWVPDPVDADPVKSS). The span at 483-496 (QDSEDDSGEPEDWV) shows a compositional bias: acidic residues. Tyr-825 carries the phosphotyrosine modification.

It belongs to the cullin family. In terms of assembly, the mammalian APC/C is composed at least of 14 distinct subunits ANAPC1, ANAPC2, CDC27/APC3, ANAPC4, ANAPC5, CDC16/APC6, ANAPC7, CDC23/APC8, ANAPC10, ANAPC11, CDC26/APC12, ANAPC13, ANAPC15 and ANAPC16 that assemble into a complex of at least 19 chains with a combined molecular mass of around 1.2 MDa; APC/C interacts with FZR1 and FBXO5. In the context of the APC/C complex, directly interacts with UBE2C and UBE2S. Interacts (via cullin domain) with ANAPC11 and with UBCH10. Interacts with NEUROD2. Interacts with FBXO43; the interaction is direct.

It functions in the pathway protein modification; protein ubiquitination. Its function is as follows. Together with the RING-H2 protein ANAPC11, constitutes the catalytic component of the anaphase promoting complex/cyclosome (APC/C), a cell cycle-regulated E3 ubiquitin ligase that controls progression through mitosis and the G1 phase of the cell cycle. The APC/C complex acts by mediating ubiquitination and subsequent degradation of target proteins: it mainly mediates the formation of 'Lys-11'-linked polyubiquitin chains and, to a lower extent, the formation of 'Lys-48'- and 'Lys-63'-linked polyubiquitin chains. The APC/C complex catalyzes assembly of branched 'Lys-11'-/'Lys-48'-linked branched ubiquitin chains on target proteins. The CDC20-APC/C complex positively regulates the formation of synaptic vesicle clustering at active zone to the presynaptic membrane in postmitotic neurons. CDC20-APC/C-induced degradation of NEUROD2 drives presynaptic differentiation. In Mus musculus (Mouse), this protein is Anaphase-promoting complex subunit 2 (Anapc2).